Reading from the N-terminus, the 339-residue chain is Protein-glutamate methylesterase/protein-glutamine glutaminase 2 (339 aa).

The Response regulatory domain occupies 2-119 (NIGIVNDLPL…GLSTDASPQA (118 aa)). Aspartate 53 carries the 4-aspartylphosphate modification. The CheB-type methylesterase domain maps to 141–336 (PGPAPERGQP…PQLISRITRP (196 aa)). Residues serine 158, histidine 185, and aspartate 278 contribute to the active site.

This sequence belongs to the CheB family. Phosphorylated by CheA. Phosphorylation of the N-terminal regulatory domain activates the methylesterase activity.

It localises to the cytoplasm. The enzyme catalyses [protein]-L-glutamate 5-O-methyl ester + H2O = L-glutamyl-[protein] + methanol + H(+). The catalysed reaction is L-glutaminyl-[protein] + H2O = L-glutamyl-[protein] + NH4(+). Its function is as follows. Involved in chemotaxis. Part of a chemotaxis signal transduction system that modulates chemotaxis in response to various stimuli. Catalyzes the demethylation of specific methylglutamate residues introduced into the chemoreceptors (methyl-accepting chemotaxis proteins or MCP) by CheR. Also mediates the irreversible deamidation of specific glutamine residues to glutamic acid. The polypeptide is Protein-glutamate methylesterase/protein-glutamine glutaminase 2 (Burkholderia lata (strain ATCC 17760 / DSM 23089 / LMG 22485 / NCIMB 9086 / R18194 / 383)).